The chain runs to 190 residues: Interferon alpha-11 (190 aa).

The first 23 residues, 1-23 (MARLCAFLMILIVMSYWSTCSLG), serve as a signal peptide directing secretion. 2 cysteine pairs are disulfide-bonded: Cys-24-Cys-122 and Cys-52-Cys-162. Asn-101 is a glycosylation site (N-linked (GlcNAc...) asparagine).

Belongs to the alpha/beta interferon family. Post-translationally, N-glycosylated.

It localises to the secreted. Has antiviral and antiproliferative activities. Produced by macrophages and stimulates the production of two enzymes: a protein kinase and an oligoadenylate synthetase. During viral infection, mediates antiviral effect, either directly by inducing interferon-stimulated genes, either indirectly through stimulation of natural killer cells enabling them to control viral replication. The chain is Interferon alpha-11 (Ifna11) from Mus musculus (Mouse).